The sequence spans 134 residues: uncharacterized protein (134 aa).

The next 2 membrane-spanning stretches (helical) occupy residues 16–36 (IFSF…NTKL) and 43–63 (IAYF…IHGT).

The protein belongs to the plectrovirus ORF5 family.

It localises to the host membrane. This is an uncharacterized protein from Spiroplasma citri (SpV1).